Here is a 146-residue protein sequence, read N- to C-terminus: Neuropeptide Y receptor type 2 (146 aa).

At 1-8 (KMGPVLCH) the chain is on the extracellular side. Cys-7 and Cys-87 form a disulfide bridge. A helical membrane pass occupies residues 9–29 (LVPYAQGLAVQVSTITLTVIA). The Cytoplasmic segment spans residues 30-49 (LDRHRCIVYHLESKISKQIS). The helical transmembrane segment at 50 to 70 (FLIIGLAWGVSALLASPLAIF) threads the bilayer. Residues 71 to 100 (REYSLIEIIPDFEIVACTEKWPGEEKGIYG) are Extracellular-facing. The chain crosses the membrane as a helical span at residues 101 to 121 (TVYSLLSLLILYVLPLGIISF). At 122 to 146 (SYARIWSKLKNHVSPGAAHDHYHQR) the chain is on the cytoplasmic side.

The protein belongs to the G-protein coupled receptor 1 family.

The protein resides in the cell membrane. Functionally, receptor for neuropeptide Y and peptide YY. The chain is Neuropeptide Y receptor type 2 (NPY2R) from Ovis aries (Sheep).